The chain runs to 158 residues: Transcription elongation factor GreA (158 aa).

A coiled-coil region spans residues 3–75; that stretch reads TEKTYPMTQE…TQLENMIRNA (73 aa).

This sequence belongs to the GreA/GreB family.

Functionally, necessary for efficient RNA polymerase transcription elongation past template-encoded arresting sites. The arresting sites in DNA have the property of trapping a certain fraction of elongating RNA polymerases that pass through, resulting in locked ternary complexes. Cleavage of the nascent transcript by cleavage factors such as GreA or GreB allows the resumption of elongation from the new 3'terminus. GreA releases sequences of 2 to 3 nucleotides. This Bacillus cytotoxicus (strain DSM 22905 / CIP 110041 / 391-98 / NVH 391-98) protein is Transcription elongation factor GreA.